The sequence spans 258 residues: Ribosomal RNA small subunit methyltransferase J (258 aa).

S-adenosyl-L-methionine contacts are provided by residues 107–108, 123–124, and Asp177; these read RD and ER.

Belongs to the methyltransferase superfamily. RsmJ family.

The protein localises to the cytoplasm. It carries out the reaction guanosine(1516) in 16S rRNA + S-adenosyl-L-methionine = N(2)-methylguanosine(1516) in 16S rRNA + S-adenosyl-L-homocysteine + H(+). Its function is as follows. Specifically methylates the guanosine in position 1516 of 16S rRNA. This is Ribosomal RNA small subunit methyltransferase J from Stutzerimonas stutzeri (strain A1501) (Pseudomonas stutzeri).